The primary structure comprises 462 residues: L-seryl-tRNA(Sec) selenium transferase (462 aa).

Lys-292 is modified (N6-(pyridoxal phosphate)lysine).

It belongs to the SelA family. It depends on pyridoxal 5'-phosphate as a cofactor.

Its subcellular location is the cytoplasm. The catalysed reaction is L-seryl-tRNA(Sec) + selenophosphate + H(+) = L-selenocysteinyl-tRNA(Sec) + phosphate. It functions in the pathway aminoacyl-tRNA biosynthesis; selenocysteinyl-tRNA(Sec) biosynthesis; selenocysteinyl-tRNA(Sec) from L-seryl-tRNA(Sec) (bacterial route): step 1/1. Functionally, converts seryl-tRNA(Sec) to selenocysteinyl-tRNA(Sec) required for selenoprotein biosynthesis. This chain is L-seryl-tRNA(Sec) selenium transferase, found in Clostridium perfringens (strain 13 / Type A).